Consider the following 254-residue polypeptide: Alcohol dehydrogenase 1 (254 aa).

NAD(+) is bound at residue 10-33; that stretch reads FVAGLGGIGLDTSREIVKSGPKNL. S138 lines the substrate pocket. The Proton acceptor role is filled by Y151.

Belongs to the short-chain dehydrogenases/reductases (SDR) family. In terms of assembly, homodimer.

It catalyses the reaction a primary alcohol + NAD(+) = an aldehyde + NADH + H(+). The enzyme catalyses a secondary alcohol + NAD(+) = a ketone + NADH + H(+). The chain is Alcohol dehydrogenase 1 (Adh1) from Drosophila montana (Fruit fly).